Here is a 93-residue protein sequence, read N- to C-terminus: Large ribosomal subunit protein uL23cz/uL23cy (93 aa).

Belongs to the universal ribosomal protein uL23 family. In terms of assembly, part of the 50S ribosomal subunit.

It is found in the plastid. The protein localises to the chloroplast. Binds to 23S rRNA. This is Large ribosomal subunit protein uL23cz/uL23cy (rpl23-A) from Piper cenocladum (Ant piper).